We begin with the raw amino-acid sequence, 342 residues long: tRNA N6-adenosine threonylcarbamoyltransferase (342 aa).

Fe cation-binding residues include His111 and His115. Substrate-binding positions include 134-138 (LVSGG), Asp167, Gly180, and Asn274. Fe cation is bound at residue Asp302.

Belongs to the KAE1 / TsaD family. Fe(2+) is required as a cofactor.

The protein localises to the cytoplasm. It carries out the reaction L-threonylcarbamoyladenylate + adenosine(37) in tRNA = N(6)-L-threonylcarbamoyladenosine(37) in tRNA + AMP + H(+). In terms of biological role, required for the formation of a threonylcarbamoyl group on adenosine at position 37 (t(6)A37) in tRNAs that read codons beginning with adenine. Is involved in the transfer of the threonylcarbamoyl moiety of threonylcarbamoyl-AMP (TC-AMP) to the N6 group of A37, together with TsaE and TsaB. TsaD likely plays a direct catalytic role in this reaction. In Herminiimonas arsenicoxydans, this protein is tRNA N6-adenosine threonylcarbamoyltransferase.